A 250-amino-acid polypeptide reads, in one-letter code: Pyridoxine 5'-phosphate synthase (250 aa).

2 residues coordinate 3-amino-2-oxopropyl phosphate: Asn-8 and Arg-19. His-44 (proton acceptor) is an active-site residue. 2 residues coordinate 1-deoxy-D-xylulose 5-phosphate: Arg-46 and His-51. Glu-76 acts as the Proton acceptor in catalysis. Residue Thr-106 participates in 1-deoxy-D-xylulose 5-phosphate binding. The Proton donor role is filled by His-200. 3-amino-2-oxopropyl phosphate contacts are provided by residues Asp-201 and 223–224 (GH).

Belongs to the PNP synthase family. In terms of assembly, homooctamer; tetramer of dimers.

It is found in the cytoplasm. The enzyme catalyses 3-amino-2-oxopropyl phosphate + 1-deoxy-D-xylulose 5-phosphate = pyridoxine 5'-phosphate + phosphate + 2 H2O + H(+). It participates in cofactor biosynthesis; pyridoxine 5'-phosphate biosynthesis; pyridoxine 5'-phosphate from D-erythrose 4-phosphate: step 5/5. Catalyzes the complicated ring closure reaction between the two acyclic compounds 1-deoxy-D-xylulose-5-phosphate (DXP) and 3-amino-2-oxopropyl phosphate (1-amino-acetone-3-phosphate or AAP) to form pyridoxine 5'-phosphate (PNP) and inorganic phosphate. The protein is Pyridoxine 5'-phosphate synthase of Allorhizobium ampelinum (strain ATCC BAA-846 / DSM 112012 / S4) (Agrobacterium vitis (strain S4)).